The chain runs to 250 residues: Proteasome subunit alpha type-4 (250 aa).

The protein belongs to the peptidase T1A family. In terms of assembly, the 26S proteasome consists of a 20S proteasome core and two 19S regulatory subunits. The 20S proteasome core is composed of 28 subunits that are arranged in four stacked rings, resulting in a barrel-shaped structure. The two end rings are each formed by seven alpha subunits, and the two central rings are each formed by seven beta subunits. The catalytic chamber with the active sites is on the inside of the barrel.

The protein resides in the cytoplasm. The protein localises to the nucleus. Its function is as follows. The proteasome is a multicatalytic proteinase complex which is characterized by its ability to cleave peptides with Arg, Phe, Tyr, Leu, and Glu adjacent to the leaving group at neutral or slightly basic pH. The proteasome has an ATP-dependent proteolytic activity. The sequence is that of Proteasome subunit alpha type-4 (psmA4) from Dictyostelium discoideum (Social amoeba).